We begin with the raw amino-acid sequence, 87 residues long: U3-theraphotoxin-Hhn1n (87 aa).

The signal sequence occupies residues 1 to 24 (MVNMKASMFLTFAGLVLLFVVCYA). Positions 25–52 (SESEEKEFPKEMLSSIFAVDNDFKQEER) are excised as a propeptide. Intrachain disulfides connect Cys54/Cys67, Cys61/Cys72, and Cys66/Cys79.

It belongs to the neurotoxin 10 (Hwtx-1) family. 51 (Hntx-8) subfamily. Hntx-8 sub-subfamily. In terms of tissue distribution, expressed by the venom gland.

The protein localises to the secreted. In terms of biological role, weakly inhibits Kv11.1/KCNH2/ERG1, Kv1.2/KCNA2, Kv1.3/KCNA3, and Kv2.1/KCNB1. The polypeptide is U3-theraphotoxin-Hhn1n (Cyriopagopus hainanus (Chinese bird spider)).